A 416-amino-acid polypeptide reads, in one-letter code: Multifunctional CCA protein (416 aa).

Positions 8 and 11 each coordinate ATP. CTP-binding residues include Gly-8 and Arg-11. Mg(2+)-binding residues include Asp-21 and Asp-23. ATP contacts are provided by Arg-91, Arg-137, and Arg-140. The CTP site is built by Arg-91, Arg-137, and Arg-140. The HD domain occupies 228 to 329; the sequence is TGLHTMMVLA…IKLFDKADFW (102 aa).

This sequence belongs to the tRNA nucleotidyltransferase/poly(A) polymerase family. Bacterial CCA-adding enzyme type 1 subfamily. Monomer. Can also form homodimers and oligomers. Mg(2+) serves as cofactor. It depends on Ni(2+) as a cofactor.

The enzyme catalyses a tRNA precursor + 2 CTP + ATP = a tRNA with a 3' CCA end + 3 diphosphate. It catalyses the reaction a tRNA with a 3' CCA end + 2 CTP + ATP = a tRNA with a 3' CCACCA end + 3 diphosphate. Catalyzes the addition and repair of the essential 3'-terminal CCA sequence in tRNAs without using a nucleic acid template. Adds these three nucleotides in the order of C, C, and A to the tRNA nucleotide-73, using CTP and ATP as substrates and producing inorganic pyrophosphate. tRNA 3'-terminal CCA addition is required both for tRNA processing and repair. Also involved in tRNA surveillance by mediating tandem CCA addition to generate a CCACCA at the 3' terminus of unstable tRNAs. While stable tRNAs receive only 3'-terminal CCA, unstable tRNAs are marked with CCACCA and rapidly degraded. The protein is Multifunctional CCA protein of Shewanella sp. (strain MR-7).